The sequence spans 241 residues: Methylthioribulose-1-phosphate dehydratase (241 aa).

A compositionally biased stretch (polar residues) spans M1–T17. The interval M1–H21 is disordered. Residue C100 coordinates substrate. Zn(2+)-binding residues include H117 and H119. The active-site Proton donor/acceptor is the E146. A Zn(2+)-binding site is contributed by H202.

It belongs to the aldolase class II family. MtnB subfamily. Requires Zn(2+) as cofactor.

Its subcellular location is the cytoplasm. The catalysed reaction is 5-(methylsulfanyl)-D-ribulose 1-phosphate = 5-methylsulfanyl-2,3-dioxopentyl phosphate + H2O. It functions in the pathway amino-acid biosynthesis; L-methionine biosynthesis via salvage pathway; L-methionine from S-methyl-5-thio-alpha-D-ribose 1-phosphate: step 2/6. In terms of biological role, catalyzes the dehydration of methylthioribulose-1-phosphate (MTRu-1-P) into 2,3-diketo-5-methylthiopentyl-1-phosphate (DK-MTP-1-P). The chain is Methylthioribulose-1-phosphate dehydratase from Aspergillus flavus (strain ATCC 200026 / FGSC A1120 / IAM 13836 / NRRL 3357 / JCM 12722 / SRRC 167).